Here is a 111-residue protein sequence, read N- to C-terminus: Putative lipid-binding protein AIR1 (111 aa).

The N-terminal stretch at 1–23 (MAPRTPLALFVSLNLLFFTYTSA) is a signal peptide. 3 disulfides stabilise this stretch: cysteine 28/cysteine 58, cysteine 38/cysteine 57, and cysteine 74/cysteine 110.

The protein belongs to the plant LTP family. PEARLI1 subfamily.

It is found in the secreted. This is Putative lipid-binding protein AIR1 (AIR1) from Arabidopsis thaliana (Mouse-ear cress).